A 170-amino-acid chain; its full sequence is Small ribosomal subunit protein bS18c (170 aa).

2 disordered regions span residues 1–59 (MYIS…IGPG) and 151–170 (NLRN…SSDC). 7 consecutive repeats follow at residues 4 to 10 (SKQPFRK), 11 to 17 (SKQPFRK), 18 to 24 (SKQTFHK), 25 to 31 (SKQPFRK), 32 to 38 (FKQPFRK), 39 to 45 (SKQPFRK), and 46 to 52 (SKQPFRR). Residues 4-52 (SKQPFRKSKQPFRKSKQTFHKSKQPFRKFKQPFRKSKQPFRKSKQPFRR) are 7 X 7 AA tandem repeats. Positions 7–55 (PFRKSKQPFRKSKQTFHKSKQPFRKFKQPFRKSKQPFRKSKQPFRRRSR) are enriched in basic residues.

The protein belongs to the bacterial ribosomal protein bS18 family. Part of the 30S ribosomal subunit.

It localises to the plastid. It is found in the chloroplast. This Zea mays (Maize) protein is Small ribosomal subunit protein bS18c (rps18).